The primary structure comprises 219 residues: Claudin-3 (219 aa).

The Cytoplasmic segment spans residues 1-8; the sequence is MSMGLEIT. A helical membrane pass occupies residues 9 to 29; it reads GTSLAVLGWLCTIVCCALPMW. At 30–80 the chain is on the extracellular side; sequence RVSAFIGSSIITAQITWEGLWMNCVVQSTGQMQCKMYDSLLALPQDLQAAR. Residues 81-101 form a helical membrane-spanning segment; it reads ALIVVSILLAAFGLLVALVGA. The Cytoplasmic portion of the chain corresponds to 102–115; it reads QCTNCVQDETAKAK. A helical transmembrane segment spans residues 116 to 136; sequence ITIVAGVLFLLAAVLTLVPVS. At 137–161 the chain is on the extracellular side; sequence WSANTIIRDFYNPLVPEAQKREMGT. A helical membrane pass occupies residues 162-182; sequence GLYVGWAAAALQLLGGALLCC. The Cytoplasmic segment spans residues 183–219; it reads SCPPREKYAPTKILYSAPRSTGPGTGTGTAYDRKDYV. Tyrosine 197 is subject to Phosphotyrosine. Serine 198 is modified (phosphoserine). Residues 218-219 form an interactions with TJP1, TJP2 and TJP3 region; that stretch reads YV.

This sequence belongs to the claudin family. Can form homo- and heteropolymers with other CLDN. Homopolymers interact with CLDN1 and CLDN2 homopolymers. Interacts in cis (within the same plasma membrane) with CLDN19. Directly interacts with TJP1/ZO-1, TJP2/ZO-2 and TJP3/ZO-3.

The protein localises to the cell junction. The protein resides in the tight junction. Its subcellular location is the cell membrane. In terms of biological role, plays a major role in tight junction-specific obliteration of the intercellular space, through calcium-independent cell-adhesion activity. The sequence is that of Claudin-3 (Cldn3) from Rattus norvegicus (Rat).